Reading from the N-terminus, the 492-residue chain is Sestrin-1 (492 aa).

The segment at 71–252 (FADSFAALGR…ICDITNGNHS (182 aa)) is N-terminal domain; may mediate the alkylhydroperoxide reductase activity. C130 serves as the catalytic Cysteine sulfenic acid (-SOH) intermediate. Phosphoserine occurs at positions 293 and 314. The tract at residues 321 to 492 (PARDVSRHFE…ALRAITRYMT (172 aa)) is C-terminal domain; mediates TORC1 regulation. L-leucine-binding positions include 386–389 (TYNT), T398, and E463.

This sequence belongs to the sestrin family. As to quaternary structure, interacts with the GATOR2 complex which is composed of MIOS, SEC13, SEH1L, WDR24 and WDR59; the interaction is negatively regulated by leucine. Interacts with RRAGA, RRAGB, RRAGC and RRAGD; may function as a guanine nucleotide dissociation inhibitor for RRAGs and regulate them. Interacts with KEAP1, RBX1 and SQSTM1; in the SQSTM1-dependent autophagic degradation of KEAP1. May interact with PRDX1. In terms of tissue distribution, highly expressed in heart and also detected in liver and skeletal muscles (at protein level).

The protein resides in the nucleus. Its subcellular location is the cytoplasm. It catalyses the reaction a hydroperoxide + L-cysteinyl-[protein] = S-hydroxy-L-cysteinyl-[protein] + an alcohol. In terms of biological role, functions as an intracellular leucine sensor that negatively regulates the TORC1 signaling pathway through the GATOR complex. In absence of leucine, binds the GATOR subcomplex GATOR2 and prevents TORC1 signaling. Binding of leucine to SESN2 disrupts its interaction with GATOR2 thereby activating the TORC1 signaling pathway. This stress-inducible metabolic regulator may also play a role in protection against oxidative and genotoxic stresses. May positively regulate the transcription by NFE2L2 of genes involved in the response to oxidative stress by facilitating the SQSTM1-mediated autophagic degradation of KEAP1. Moreover, may prevent the accumulation of reactive oxygen species (ROS) through the alkylhydroperoxide reductase activity born by the N-terminal domain of the protein. Was originally reported to contribute to oxidative stress resistance by reducing PRDX1. However, this could not be confirmed. This chain is Sestrin-1, found in Mus musculus (Mouse).